A 540-amino-acid polypeptide reads, in one-letter code: SNW/SKI-interacting protein B (540 aa).

4 disordered regions span residues 1–106 (MVLR…SLTV), 215–273 (GETQ…NPKG), 351–402 (GAAP…RDRD), and 502–526 (ASVAAGKRERPVEFDGPEMEEDPFH). Basic and acidic residues-rich tracts occupy residues 16–29 (PHDHTEDEWFKERY) and 83–94 (MGRRGGDGDGEQ). Residues 189 to 353 (PEFIKYTPAR…KARAEMLGAA (165 aa)) are SNW. A compositionally biased stretch (pro residues) spans 236–251 (AGSPPVPVLRSPPRPP). A compositionally biased stretch (basic and acidic residues) spans 359–382 (ERSKAAAERDAIREERRRERRLEA). Positions 383–393 (RAAAAAASKKS) are enriched in low complexity.

It belongs to the SNW family.

It is found in the nucleus. The polypeptide is SNW/SKI-interacting protein B (Oryza sativa subsp. japonica (Rice)).